The chain runs to 241 residues: UDP-2,3-diacylglucosamine hydrolase (241 aa).

Residues D9, H11, D42, N79, and H114 each coordinate Mn(2+). 79–80 (NR) contributes to the substrate binding site. The substrate site is built by D122, S160, N164, K167, and H195. Residues H195 and H197 each contribute to the Mn(2+) site.

It belongs to the LpxH family. It depends on Mn(2+) as a cofactor.

It is found in the cell inner membrane. It catalyses the reaction UDP-2-N,3-O-bis[(3R)-3-hydroxytetradecanoyl]-alpha-D-glucosamine + H2O = 2-N,3-O-bis[(3R)-3-hydroxytetradecanoyl]-alpha-D-glucosaminyl 1-phosphate + UMP + 2 H(+). It participates in glycolipid biosynthesis; lipid IV(A) biosynthesis; lipid IV(A) from (3R)-3-hydroxytetradecanoyl-[acyl-carrier-protein] and UDP-N-acetyl-alpha-D-glucosamine: step 4/6. Its function is as follows. Hydrolyzes the pyrophosphate bond of UDP-2,3-diacylglucosamine to yield 2,3-diacylglucosamine 1-phosphate (lipid X) and UMP by catalyzing the attack of water at the alpha-P atom. Involved in the biosynthesis of lipid A, a phosphorylated glycolipid that anchors the lipopolysaccharide to the outer membrane of the cell. The polypeptide is UDP-2,3-diacylglucosamine hydrolase (Shewanella frigidimarina (strain NCIMB 400)).